Consider the following 233-residue polypeptide: MAKLTKRMRTIRAKVDVTKEYDINEAVALLKEMATAKFVESVDVAVNLGIDARKSDQNVRGATVLPHGTGRDIRVAVFTQGANAEAAKAAGAELVGMEDLADLVKKGEMNFDVVIASPDAMRVVGQLGTILGPRGLMPNPKVGTVTPNVAEAVKNAKAGQVRYRNDKNGIIHTTIGKVTFEADQLKENLEALLVALKKAKPSSAKGVFVKKVSISTTMGAGVAVDQNTLSAQV.

It belongs to the universal ribosomal protein uL1 family. Part of the 50S ribosomal subunit.

Its function is as follows. Binds directly to 23S rRNA. The L1 stalk is quite mobile in the ribosome, and is involved in E site tRNA release. Functionally, protein L1 is also a translational repressor protein, it controls the translation of the L11 operon by binding to its mRNA. This is Large ribosomal subunit protein uL1 from Vibrio cholerae serotype O1 (strain ATCC 39541 / Classical Ogawa 395 / O395).